A 147-amino-acid chain; its full sequence is Ubiquitin-conjugating enzyme E2 D1 (147 aa).

The region spanning 1-147 (MALKRIQKEL…AREWTQKYAM (147 aa)) is the UBC core domain. C85 acts as the Glycyl thioester intermediate in catalysis.

Belongs to the ubiquitin-conjugating enzyme family. In terms of assembly, component of a E3 ubiquitin ligase complex containing UBE2D1, SIAH1, CACYBP/SIP, SKP1, APC and TBL1X. Interacts with RNF11. In terms of processing, autoubiquitinated.

Its subcellular location is the cytoplasm. It carries out the reaction S-ubiquitinyl-[E1 ubiquitin-activating enzyme]-L-cysteine + [E2 ubiquitin-conjugating enzyme]-L-cysteine = [E1 ubiquitin-activating enzyme]-L-cysteine + S-ubiquitinyl-[E2 ubiquitin-conjugating enzyme]-L-cysteine.. The catalysed reaction is S-ubiquitinyl-[E1 ubiquitin-activating enzyme]-L-cysteine + [acceptor protein]-L-lysine = [E1 ubiquitin-activating enzyme]-L-cysteine + N(6)-monoubiquitinyl-[acceptor protein]-L-lysine.. It functions in the pathway protein modification; protein ubiquitination. Accepts ubiquitin from the E1 complex and catalyzes its covalent attachment to other proteins. In vitro catalyzes 'Lys-48'-linked polyubiquitination. Mediates the selective degradation of short-lived and abnormal proteins. Functions in the E6/E6-AP-induced ubiquitination of p53/TP53. Mediates ubiquitination of PEX5 and auto-ubiquitination of STUB1, TRAF6 and TRIM63/MURF1. Ubiquitinates STUB1-associated HSP90AB1 in vitro. Lacks inherent specificity for any particular lysine residue of ubiquitin. Essential for viral activation of IRF3. Mediates polyubiquitination of CYP3A4. In Bos taurus (Bovine), this protein is Ubiquitin-conjugating enzyme E2 D1 (UBE2D1).